The primary structure comprises 92 residues: PqqA binding protein (92 aa).

Belongs to the PqqD family. Monomer. Interacts with PqqE.

It functions in the pathway cofactor biosynthesis; pyrroloquinoline quinone biosynthesis. In terms of biological role, functions as a PqqA binding protein and presents PqqA to PqqE, in the pyrroloquinoline quinone (PQQ) biosynthetic pathway. In Stutzerimonas stutzeri (strain A1501) (Pseudomonas stutzeri), this protein is PqqA binding protein.